A 259-amino-acid chain; its full sequence is Snake venom serine protease homolog rhinocerase 3 (259 aa).

The first 17 residues, 1-17, serve as a signal peptide directing secretion; sequence VLIRVLANLLLLQLSYA. Positions 18-23 are excised as a propeptide; sequence QESSEL. Residues 24–250 enclose the Peptidase S1 domain; that stretch reads VIGGDECDIN…YTDWIEGIIA (227 aa). Disulfide bonds link Cys-30–Cys-164, Cys-51–Cys-67, Cys-99–Cys-257, Cys-143–Cys-211, Cys-175–Cys-190, and Cys-201–Cys-226. Residue Asn-80 is glycosylated (N-linked (GlcNAc...) asparagine). Asn-252 is a glycosylation site (N-linked (GlcNAc...) asparagine).

It belongs to the peptidase S1 family. Snake venom subfamily. In terms of tissue distribution, expressed by the venom gland.

Its subcellular location is the secreted. Its function is as follows. Snake venom serine protease homolog that may act in the hemostasis system of the prey. This chain is Snake venom serine protease homolog rhinocerase 3, found in Bitis rhinoceros (West African gaboon viper).